The sequence spans 245 residues: 6-carboxyhexanoate--CoA ligase (245 aa).

The protein belongs to the BioW family. Homodimer. Requires Mg(2+) as cofactor.

It catalyses the reaction heptanedioate + ATP + CoA = 6-carboxyhexanoyl-CoA + AMP + diphosphate. It functions in the pathway metabolic intermediate metabolism; pimeloyl-CoA biosynthesis; pimeloyl-CoA from pimelate: step 1/1. In terms of biological role, catalyzes the transformation of pimelate into pimeloyl-CoA with concomitant hydrolysis of ATP to AMP. The polypeptide is 6-carboxyhexanoate--CoA ligase (Methanococcus vannielii (strain ATCC 35089 / DSM 1224 / JCM 13029 / OCM 148 / SB)).